A 293-amino-acid polypeptide reads, in one-letter code: Ribosomal protein L11 methyltransferase (293 aa).

S-adenosyl-L-methionine contacts are provided by T145, G166, D188, and N230.

The protein belongs to the methyltransferase superfamily. PrmA family.

Its subcellular location is the cytoplasm. It carries out the reaction L-lysyl-[protein] + 3 S-adenosyl-L-methionine = N(6),N(6),N(6)-trimethyl-L-lysyl-[protein] + 3 S-adenosyl-L-homocysteine + 3 H(+). Methylates ribosomal protein L11. The chain is Ribosomal protein L11 methyltransferase from Shewanella baltica (strain OS223).